Reading from the N-terminus, the 139-residue chain is Protein PsiE homolog (139 aa).

Transmembrane regions (helical) follow at residues 20-40, 60-80, 85-105, and 111-131; these read IVLCTALIALAIVLIIALVKI, AEQAVMFFLYFGFIGLIVQYF, HFPLRYFIYAGITAMLRLIIV, and VDTILFAGAILIMVIALCLVL.

Belongs to the PsiE family.

It is found in the cell inner membrane. This is Protein PsiE homolog from Haemophilus influenzae (strain 86-028NP).